A 154-amino-acid chain; its full sequence is Transcriptional repressor NrdR (154 aa).

Residues 3–34 (CPFCRHPDSRVVDSREADEGQAIRRRRSCPEC) fold into a zinc finger. Positions 46–136 (LAVVKRSGVT…VYRGFSSAED (91 aa)) constitute an ATP-cone domain.

Belongs to the NrdR family. Requires Zn(2+) as cofactor.

Negatively regulates transcription of bacterial ribonucleotide reductase nrd genes and operons by binding to NrdR-boxes. This Mycobacteroides abscessus (strain ATCC 19977 / DSM 44196 / CCUG 20993 / CIP 104536 / JCM 13569 / NCTC 13031 / TMC 1543 / L948) (Mycobacterium abscessus) protein is Transcriptional repressor NrdR.